The following is a 418-amino-acid chain: Nickel and cobalt resistance protein CnrC (418 aa).

A signal peptide spans 1 to 29 (MKQVISSFLCRPRFVGSAIWLLPVALSHA).

This sequence belongs to the outer membrane factor (OMF) (TC 1.B.17) family.

The products of the genes cnrA, cnrB, and cnrC are likely to form a membrane-bound protein complex catalyzing an energy-dependent efflux of Ni(2+) and Co(2+). The mechanism of action of the CnrCBA complex may be that of a proton/cation antiporter. The protein is Nickel and cobalt resistance protein CnrC (cnrC) of Cupriavidus metallidurans (strain ATCC 43123 / DSM 2839 / NBRC 102507 / CH34) (Ralstonia metallidurans).